A 192-amino-acid polypeptide reads, in one-letter code: MKRLEVSNQAKLPTQFGEFCIQCFREKGSNGSKDHLVIFTPNFPQNPLVRLHSECLTGDALGSQKCDCGGALQMALERISKEGGLVIYLRQEGRGIGLFNKVNAYALQDKGYDTIQANEMIGFKDDERDYSIAGEILEYYRIKKMRLLTNNPLKIAALEKYAEVTRESLIVCANEHNQGYLEVKKLKMGHLL.

Arginine 50–glutamate 54 serves as a coordination point for GTP. Residues cysteine 55, cysteine 66, and cysteine 68 each contribute to the Zn(2+) site. GTP is bound by residues glutamate 92 to arginine 94 and threonine 114. The active-site Proton acceptor is the aspartate 126. Arginine 128 functions as the Nucleophile in the catalytic mechanism. GTP-binding residues include threonine 149 and lysine 154.

Belongs to the GTP cyclohydrolase II family. The cofactor is Zn(2+).

The catalysed reaction is GTP + 4 H2O = 2,5-diamino-6-hydroxy-4-(5-phosphoribosylamino)-pyrimidine + formate + 2 phosphate + 3 H(+). It functions in the pathway cofactor biosynthesis; riboflavin biosynthesis; 5-amino-6-(D-ribitylamino)uracil from GTP: step 1/4. Its function is as follows. Catalyzes the conversion of GTP to 2,5-diamino-6-ribosylamino-4(3H)-pyrimidinone 5'-phosphate (DARP), formate and pyrophosphate. This chain is GTP cyclohydrolase-2, found in Helicobacter pylori (strain J99 / ATCC 700824) (Campylobacter pylori J99).